The sequence spans 185 residues: Ribosome-recycling factor (185 aa).

It belongs to the RRF family.

The protein localises to the cytoplasm. Functionally, responsible for the release of ribosomes from messenger RNA at the termination of protein biosynthesis. May increase the efficiency of translation by recycling ribosomes from one round of translation to another. The polypeptide is Ribosome-recycling factor (Bacillus cytotoxicus (strain DSM 22905 / CIP 110041 / 391-98 / NVH 391-98)).